The sequence spans 221 residues: 7-cyano-7-deazaguanine synthase (221 aa).

10-20 (FSGGQDSTTCL) contributes to the ATP binding site. Zn(2+) contacts are provided by Cys187, Cys196, Cys199, and Cys202.

It belongs to the QueC family. In terms of assembly, homodimer. It depends on Zn(2+) as a cofactor.

The enzyme catalyses 7-carboxy-7-deazaguanine + NH4(+) + ATP = 7-cyano-7-deazaguanine + ADP + phosphate + H2O + H(+). It functions in the pathway purine metabolism; 7-cyano-7-deazaguanine biosynthesis. Functionally, catalyzes the ATP-dependent conversion of 7-carboxy-7-deazaguanine (CDG) to 7-cyano-7-deazaguanine (preQ(0)). This chain is 7-cyano-7-deazaguanine synthase, found in Shouchella clausii (strain KSM-K16) (Alkalihalobacillus clausii).